A 256-amino-acid chain; its full sequence is Thiazole synthase (256 aa).

Lys95 acts as the Schiff-base intermediate with DXP in catalysis. 1-deoxy-D-xylulose 5-phosphate-binding positions include Gly156, 182 to 183, and 204 to 205; these read AG and NT.

This sequence belongs to the ThiG family. As to quaternary structure, homotetramer. Forms heterodimers with either ThiH or ThiS.

Its subcellular location is the cytoplasm. The catalysed reaction is [ThiS sulfur-carrier protein]-C-terminal-Gly-aminoethanethioate + 2-iminoacetate + 1-deoxy-D-xylulose 5-phosphate = [ThiS sulfur-carrier protein]-C-terminal Gly-Gly + 2-[(2R,5Z)-2-carboxy-4-methylthiazol-5(2H)-ylidene]ethyl phosphate + 2 H2O + H(+). It participates in cofactor biosynthesis; thiamine diphosphate biosynthesis. In terms of biological role, catalyzes the rearrangement of 1-deoxy-D-xylulose 5-phosphate (DXP) to produce the thiazole phosphate moiety of thiamine. Sulfur is provided by the thiocarboxylate moiety of the carrier protein ThiS. In vitro, sulfur can be provided by H(2)S. This Escherichia fergusonii (strain ATCC 35469 / DSM 13698 / CCUG 18766 / IAM 14443 / JCM 21226 / LMG 7866 / NBRC 102419 / NCTC 12128 / CDC 0568-73) protein is Thiazole synthase.